The chain runs to 159 residues: 2-C-methyl-D-erythritol 2,4-cyclodiphosphate synthase (159 aa).

The a divalent metal cation site is built by D8 and H10. 4-CDP-2-C-methyl-D-erythritol 2-phosphate contacts are provided by residues 8–10 (DVH) and 34–35 (HS). Residue H42 coordinates a divalent metal cation. 4-CDP-2-C-methyl-D-erythritol 2-phosphate-binding positions include 56-58 (DIG), 61-65 (FPDTD), 100-106 (AQAPKML), 132-135 (TTTE), F139, and R142.

This sequence belongs to the IspF family. As to quaternary structure, homotrimer. A divalent metal cation serves as cofactor.

The catalysed reaction is 4-CDP-2-C-methyl-D-erythritol 2-phosphate = 2-C-methyl-D-erythritol 2,4-cyclic diphosphate + CMP. Its pathway is isoprenoid biosynthesis; isopentenyl diphosphate biosynthesis via DXP pathway; isopentenyl diphosphate from 1-deoxy-D-xylulose 5-phosphate: step 4/6. In terms of biological role, involved in the biosynthesis of isopentenyl diphosphate (IPP) and dimethylallyl diphosphate (DMAPP), two major building blocks of isoprenoid compounds. Catalyzes the conversion of 4-diphosphocytidyl-2-C-methyl-D-erythritol 2-phosphate (CDP-ME2P) to 2-C-methyl-D-erythritol 2,4-cyclodiphosphate (ME-CPP) with a corresponding release of cytidine 5-monophosphate (CMP). This is 2-C-methyl-D-erythritol 2,4-cyclodiphosphate synthase from Klebsiella pneumoniae (strain 342).